We begin with the raw amino-acid sequence, 757 residues long: GTPase-activating protein GYP7 (757 aa).

One can recognise a Rab-GAP TBC domain in the interval 395 to 640 (GLEDCIRGEA…SLWEILWTDY (246 aa)). The interval 482 to 507 (GVGSDRLPTTRESSPETPDEADDDEF) is disordered. Residues 498–507 (TPDEADDDEF) are compositionally biased toward acidic residues.

Its function is as follows. Most effectively accelerate the intrinsic GTPase activity of YPT7. It is also active, but to a lesser extent, on YPT31, YPT32 and YPT1. YPT6 and SEC4. This chain is GTPase-activating protein GYP7 (GYP7), found in Debaryomyces hansenii (strain ATCC 36239 / CBS 767 / BCRC 21394 / JCM 1990 / NBRC 0083 / IGC 2968) (Yeast).